The chain runs to 508 residues: MKKKNIYSIRKLGVGIASVTLGTLLISGGVTPAANAAQHDEAQQNAFYQVLNMPNLNADQRNGFIQSLKDDPSQSANVLGEAQKLNDSQAPKADAQQNKFNKDQQSAFYEILNMPNLNEEQRNGFIQSLKDDPSQSTNVLGEAKKLNESQAPKADNNFNKEQQNAFYEILNMPNLNEEQRNGFIQSLKDDPSQSANLLAEAKKLNESQAPKADNKFNKEQQNAFYEILHLPNLNEEQRNGFIQSLKDDPSQSANLLAEAKKLNDAQAPKADNKFNKEQQNAFYEILHLPNLTEEQRNGFIQSLKDDPSVSKEILAEAKKLNDAQAPKEEDNNKPGKEDGNKPGKEDGNKPGKEDNKKPGKEDGNKPGKEDNKKPGKEDGNKPGKEDGNKPGKEDGNKPGKEDGNKPGKEDGNGVHVVKPGDTVNDIAKANGTTADKIAADNKLADKNMIKPGQELVVDKKQPANHADANKAQALPETGEENPFIGTTVFGGLSLALGAALLAGRRREL.

A signal peptide spans 1–36 (MKKKNIYSIRKLGVGIASVTLGTLLISGGVTPAANA). A YSIRK-G/S signaling motif motif is present at residues 7 to 18 (YSIRKLGVGIAS). The Immunoglobulin-binding region E repeat unit spans residues 37-92 (AQHDEAQQNAFYQVLNMPNLNADQRNGFIQSLKDDPSQSANVLGEAQKLNDSQAPK). The Immunoglobulin-binding region D repeat unit spans residues 93-153 (ADAQQNKFNK…KKLNESQAPK (61 aa)). An Immunoglobulin-binding region A repeat occupies 154 to 211 (ADNNFNKEQQNAFYEILNMPNLNEEQRNGFIQSLKDDPSQSANLLAEAKKLNESQAPK). Residues 212 to 269 (ADNKFNKEQQNAFYEILHLPNLNEEQRNGFIQSLKDDPSQSANLLAEAKKLNDAQAPK) form an Immunoglobulin-binding region B repeat. The stretch at 270 to 327 (ADNKFNKEQQNAFYEILHLPNLTEEQRNGFIQSLKDDPSVSKEILAEAKKLNDAQAPK) is one Immunoglobulin-binding region C repeat. The span at 318 to 412 (KKLNDAQAPK…GNKPGKEDGN (95 aa)) shows a compositional bias: basic and acidic residues. Disordered regions lie at residues 318 to 424 (KKLN…DTVN) and 459 to 479 (KKQPANHADANKAQALPETGE). Repeat copies occupy residues 333–340 (KPGKEDGN), 341–348 (KPGKEDGN), 349–356 (KPGKEDNK), 357–364 (KPGKEDGN), 365–372 (KPGKEDNK), 373–380 (KPGKEDGN), 381–388 (KPGKEDGN), 389–396 (KPGKEDGN), 397–405 (KPGKEDGNK), 406–413 (PGKEDGNG), 414–421 (VHVVKPGD), and 422–429 (TVNDIAKA). The segment at 333 to 408 (KPGKEDGNKP…GKEDGNKPGK (76 aa)) is 12 X 8 AA approximate tandem repeats. The region spanning 413–457 (GVHVVKPGDTVNDIAKANGTTADKIAADNKLADKNMIKPGQELVV) is the LysM domain. The LPXTG sorting signal motif lies at 474-478 (LPETG). A Pentaglycyl murein peptidoglycan amidated threonine modification is found at Thr-477. Residues 478-508 (GEENPFIGTTVFGGLSLALGAALLAGRRREL) constitute a propeptide, removed by sortase.

The protein belongs to the immunoglobulin-binding protein SpA family. Interacts with host TNFRSF1A; this interaction leads to the stimulation of both surface expression and shedding of TNFRSF1A.

The protein resides in the secreted. It is found in the cell wall. In terms of biological role, plays a role in the inhibition of the host innate and adaptive immune responses. Possesses five immunoglobulin-binding domains that capture both the fragment crystallizable region (Fc region) and the Fab region (part of Ig that identifies antigen) of immunoglobulins. In turn, Staphylococcus aureus is protected from phagocytic killing via inhibition of Ig Fc region. In addition, the host elicited B-cell response is prevented due to a decrease of antibody-secreting cell proliferation that enter the bone marrow, thereby decreasing long-term antibody production. Inhibits osteogenesis by preventing osteoblast proliferation and expression of alkaline phosphatase, type I collagen, osteopontin and osteocalcin. Acts directly as a pro-inflammatory factor in the lung through its ability to bind and activate tumor necrosis factor alpha receptor 1/TNFRSF1A. This chain is Immunoglobulin G-binding protein A (spa), found in Staphylococcus aureus.